The primary structure comprises 473 residues: Cardiolipin synthase C (473 aa).

2 consecutive PLD phosphodiesterase domains span residues 125 to 152 (LNRR…GDAY) and 364 to 391 (SGAS…DPRS). Active-site residues include histidine 130, lysine 132, aspartate 137, histidine 369, lysine 371, and aspartate 376.

The protein belongs to the phospholipase D family. Cardiolipin synthase subfamily. ClsC sub-subfamily.

The catalysed reaction is a 1,2-diacyl-sn-glycero-3-phospho-(1'-sn-glycerol) + a 1,2-diacyl-sn-glycero-3-phosphoethanolamine = a cardiolipin + ethanolamine. With respect to regulation, full activity requires coexpression with the neighboring gene ymdB. Functionally, catalyzes the synthesis of cardiolipin (CL) (diphosphatidylglycerol) from phosphatidylglycerol (PG) and phosphatidylethanolamine (PE). In Escherichia coli (strain K12), this protein is Cardiolipin synthase C.